The sequence spans 298 residues: 4-diphosphocytidyl-2-C-methyl-D-erythritol kinase (298 aa).

The active site involves Lys11. ATP is bound at residue 94 to 104; the sequence is PMGGGLGGGSS. The active site involves Asp136.

Belongs to the GHMP kinase family. IspE subfamily.

It carries out the reaction 4-CDP-2-C-methyl-D-erythritol + ATP = 4-CDP-2-C-methyl-D-erythritol 2-phosphate + ADP + H(+). Its pathway is isoprenoid biosynthesis; isopentenyl diphosphate biosynthesis via DXP pathway; isopentenyl diphosphate from 1-deoxy-D-xylulose 5-phosphate: step 3/6. Its function is as follows. Catalyzes the phosphorylation of the position 2 hydroxy group of 4-diphosphocytidyl-2C-methyl-D-erythritol. The protein is 4-diphosphocytidyl-2-C-methyl-D-erythritol kinase of Chromohalobacter salexigens (strain ATCC BAA-138 / DSM 3043 / CIP 106854 / NCIMB 13768 / 1H11).